We begin with the raw amino-acid sequence, 305 residues long: MAREDSVKCLRCLLYALNLLFWLMSISVLAVSAWMRDYLNNVLTLTAETRVEEAVILTYFPVVHPVMIAVCCFLIIVGMLGYCGTVKRNLLLLAWYFGSLLVIFCVELACGVWTYEQELMVPVQWSDMVTLKARMTNYGLPRYRWLTHAWNFFQREFKCCGVVYFTDWLEMTEMDWPPDSCCVREFPGCSKQAHQEDLSDLYQEGCGKKMYSFLRGTKQLQVLRFLGISIGVTQILAMILTITLLWALYYDRREPGTDQMMSLKNDNSQHLSCPSVELLKPSLSRIFEHTSMANSFNTHFEMEEL.

The Cytoplasmic segment spans residues 1 to 12 (MAREDSVKCLRC). Residues C9 and C12 are each lipidated (S-palmitoyl cysteine). A helical transmembrane segment spans residues 13–33 (LLYALNLLFWLMSISVLAVSA). Residues 34–59 (WMRDYLNNVLTLTAETRVEEAVILTY) are Extracellular-facing. A helical membrane pass occupies residues 60 to 80 (FPVVHPVMIAVCCFLIIVGML). Topologically, residues 81–89 (GYCGTVKRN) are cytoplasmic. The S-palmitoyl cysteine moiety is linked to residue C83. The chain crosses the membrane as a helical span at residues 90-110 (LLLLAWYFGSLLVIFCVELAC). The Extracellular portion of the chain corresponds to 111–224 (GVWTYEQELM…RGTKQLQVLR (114 aa)). The chain crosses the membrane as a helical span at residues 225-245 (FLGISIGVTQILAMILTITLL). Residues 246–305 (WALYYDRREPGTDQMMSLKNDNSQHLSCPSVELLKPSLSRIFEHTSMANSFNTHFEMEEL) lie on the Cytoplasmic side of the membrane.

It belongs to the tetraspanin (TM4SF) family. Component of a complex, at least composed of TSPAN12, FZD4 and norrin (NDP). Interacts (when palmitoylated) with ADAM10. Interacts with MMP14/MT1-MMP. Post-translationally, palmitoylated; required for interaction with ADAM10. The precise position of palmitoylated residues is unclear and occurs either on Cys-9, Cys-12 and/or Cys-83.

It localises to the cell membrane. Functionally, regulator of cell surface receptor signal transduction. Plays a central role in retinal vascularization by regulating norrin (NDP) signal transduction. Acts in concert with norrin (NDP) to promote FZD4 multimerization and subsequent activation of FZD4, leading to promote accumulation of beta-catenin (CTNNB1) and stimulate LEF/TCF-mediated transcriptional programs. Suprisingly, it only activates the norrin (NDP)-dependent activation of FZD4, while it does not activate the Wnt-dependent activation of FZD4, suggesting the existence of a Wnt-independent signaling that also promote accumulation the beta-catenin (CTNNB1). Acts as a regulator of membrane proteinases such as ADAM10 and MMP14/MT1-MMP. Activates ADAM10-dependent cleavage activity of amyloid precursor protein (APP). Activates MMP14/MT1-MMP-dependent cleavage activity. The protein is Tetraspanin-12 (TSPAN12) of Homo sapiens (Human).